Consider the following 627-residue polypeptide: MNLIDYEKQYDVIVAGAGHAGCEAALAAARMGCETLLLTINLDAIALMSCNPAIGGLAKGHLVKEIDALGGEMGKNIDATGIQYRILNTRKGPAVRASRAQADKQLYRLRMKHVMEEQEHLSLKQGEVTGLVVEDGRVRGVVTKVGVRFLGKTVILTTGTFMRGLIHVGLTNYPGGRAGDLPSVGLSDQLRDLGFTVGRLKTGTPARLDGNTIDFSRLEPQYGDDPPVPFSFSTERIDRPQLPCYIAYTNERTHEIIRSGLDRSPLYSGVIEGVGPRYCPSIEDKVMRFPDKDRHQSFLEPEGRDTVEYYPSGLSTSLPIDIQYRLYRSIEGLENVEIMRPAYAIEYDYVDPIQLHTSLETKLIRNLYHAGQINGTSGYEEAAGQGLMAGINAALRVQGEEPLVLGRDEAYIGVMIDDLVTLGTREPYRMFTSRAEYRLLLREDNADLRLRERGHAVGLVRDEEYRLFLEKRERIGAELERLRTAKLLPSEADPSFLETYGMTDLRNALTFEQLLRRPDITYEELSQIDPVAGMVPPSVKEQVEIQIKYQGYIERQLDQVARARKLEGTRIPDDLDYTVIPGLSAEVREKLLRFLPDTLGQASRIQGVTPAAVGILSVAIKSRSASS.

FAD-binding positions include 16–21 (GAGHAG), Val128, and Ser183. 275 to 289 (GPRYCPSIEDKVMRF) lines the NAD(+) pocket. Residue Gln372 participates in FAD binding.

The protein belongs to the MnmG family. In terms of assembly, homodimer. Heterotetramer of two MnmE and two MnmG subunits. It depends on FAD as a cofactor.

It localises to the cytoplasm. NAD-binding protein involved in the addition of a carboxymethylaminomethyl (cmnm) group at the wobble position (U34) of certain tRNAs, forming tRNA-cmnm(5)s(2)U34. The polypeptide is tRNA uridine 5-carboxymethylaminomethyl modification enzyme MnmG (Geobacter sulfurreducens (strain ATCC 51573 / DSM 12127 / PCA)).